Here is a 367-residue protein sequence, read N- to C-terminus: Germination protease (367 aa).

Residues 1–15 (MKEPLDLSKYSIRTD) constitute a propeptide that is removed on maturation.

Belongs to the peptidase A25 family. As to quaternary structure, homotetramer. In terms of processing, autoproteolytically processed. The inactive tetrameric zymogen termed p46 autoprocesses to a smaller form termed p41, which is active only during spore germination.

It catalyses the reaction Endopeptidase action with P4 Glu or Asp, P1 preferably Glu &gt; Asp, P1' hydrophobic and P2' Ala.. Functionally, initiates the rapid degradation of small, acid-soluble proteins during spore germination. The protein is Germination protease of Bacillus cereus (strain B4264).